We begin with the raw amino-acid sequence, 435 residues long: Xylose isomerase (435 aa).

Active-site residues include His99 and Asp102. Mg(2+) is bound by residues Glu230, Glu266, His269, Asp294, Asp305, Asp307, and Asp337.

This sequence belongs to the xylose isomerase family. As to quaternary structure, homotetramer. Mg(2+) is required as a cofactor.

The protein localises to the cytoplasm. The enzyme catalyses alpha-D-xylose = alpha-D-xylulofuranose. The protein is Xylose isomerase of Enterococcus faecalis (strain ATCC 700802 / V583).